Here is a 561-residue protein sequence, read N- to C-terminus: Dihydroxy-acid dehydratase (561 aa).

D78 contacts Mg(2+). Position 119 (C119) interacts with [2Fe-2S] cluster. Mg(2+) is bound by residues D120 and K121. K121 is modified (N6-carboxylysine). [2Fe-2S] cluster is bound at residue C192. E448 is a Mg(2+) binding site. S474 acts as the Proton acceptor in catalysis.

It belongs to the IlvD/Edd family. In terms of assembly, homodimer. Requires [2Fe-2S] cluster as cofactor. It depends on Mg(2+) as a cofactor.

The catalysed reaction is (2R)-2,3-dihydroxy-3-methylbutanoate = 3-methyl-2-oxobutanoate + H2O. It catalyses the reaction (2R,3R)-2,3-dihydroxy-3-methylpentanoate = (S)-3-methyl-2-oxopentanoate + H2O. It functions in the pathway amino-acid biosynthesis; L-isoleucine biosynthesis; L-isoleucine from 2-oxobutanoate: step 3/4. Its pathway is amino-acid biosynthesis; L-valine biosynthesis; L-valine from pyruvate: step 3/4. In terms of biological role, functions in the biosynthesis of branched-chain amino acids. Catalyzes the dehydration of (2R,3R)-2,3-dihydroxy-3-methylpentanoate (2,3-dihydroxy-3-methylvalerate) into 2-oxo-3-methylpentanoate (2-oxo-3-methylvalerate) and of (2R)-2,3-dihydroxy-3-methylbutanoate (2,3-dihydroxyisovalerate) into 2-oxo-3-methylbutanoate (2-oxoisovalerate), the penultimate precursor to L-isoleucine and L-valine, respectively. This Sulfurimonas denitrificans (strain ATCC 33889 / DSM 1251) (Thiomicrospira denitrificans (strain ATCC 33889 / DSM 1251)) protein is Dihydroxy-acid dehydratase.